The chain runs to 64 residues: DNA-binding protein 7b (64 aa).

Residues Lys5 and Lys7 each carry the N6-methyllysine modification.

This sequence belongs to the 7 kDa DNA-binding/endoribonuclease P2 family. As to quaternary structure, monomer. Post-translationally, lys-5 and Lys-7 may be methylated.

Its subcellular location is the cytoplasm. Can constrain negative DNA supercoils. May be involved in maintaining the integrity of the genome at high temperature. The chain is DNA-binding protein 7b from Saccharolobus shibatae (strain ATCC 51178 / DSM 5389 / JCM 8931 / NBRC 15437 / B12) (Sulfolobus shibatae).